Consider the following 539-residue polypeptide: uncharacterized protein (539 aa).

6–20 contacts FAD; sequence LIIGGGGAAARAAIE. Residues histidine 227 and arginine 243 contribute to the active site.

Belongs to the FAD-dependent oxidoreductase 2 family. FRD/SDH subfamily. FAD is required as a cofactor.

This is an uncharacterized protein from Methanocaldococcus jannaschii (strain ATCC 43067 / DSM 2661 / JAL-1 / JCM 10045 / NBRC 100440) (Methanococcus jannaschii).